The primary structure comprises 192 residues: HTH-type transcriptional repressor SCO4008 (192 aa).

The HTH tetR-type domain occupies 7-67 (EATKARIFEA…SVLEKKMLDL (61 aa)). The H-T-H motif DNA-binding region spans 30-49 (RIDRIAAEARANKQLIYAYY).

Homodimer. Four dimers bind to the two operator sites.

Binding of a wide range of cationic hydrophobic compounds to SCO4008 causes a decrease in DNA-binding, probably via allosteric conformational change of SCO4008. In terms of biological role, probably regulates the expression of its own gene and the adjacent SCO4007 gene by binding to two operator sites in the SCO4007-SCO4008 intergenic region. The sequence is that of HTH-type transcriptional repressor SCO4008 from Streptomyces coelicolor (strain ATCC BAA-471 / A3(2) / M145).